A 402-amino-acid chain; its full sequence is Pyridinium-3,5-bisthiocarboxylic acid mononucleotide nickel insertion protein (402 aa).

Belongs to the LarC family.

It carries out the reaction Ni(II)-pyridinium-3,5-bisthiocarboxylate mononucleotide = pyridinium-3,5-bisthiocarboxylate mononucleotide + Ni(2+). Functionally, involved in the biosynthesis of a nickel-pincer cofactor ((SCS)Ni(II) pincer complex). Binds Ni(2+), and functions in nickel delivery to pyridinium-3,5-bisthiocarboxylic acid mononucleotide (P2TMN), to form the mature cofactor. Is thus probably required for the activation of nickel-pincer cofactor-dependent enzymes. The sequence is that of Pyridinium-3,5-bisthiocarboxylic acid mononucleotide nickel insertion protein from Thermotoga sp. (strain RQ2).